The sequence spans 212 residues: Protein-L-isoaspartate O-methyltransferase (212 aa).

Serine 60 is an active-site residue.

Belongs to the methyltransferase superfamily. L-isoaspartyl/D-aspartyl protein methyltransferase family.

It is found in the cytoplasm. The catalysed reaction is [protein]-L-isoaspartate + S-adenosyl-L-methionine = [protein]-L-isoaspartate alpha-methyl ester + S-adenosyl-L-homocysteine. In terms of biological role, catalyzes the methyl esterification of L-isoaspartyl residues in peptides and proteins that result from spontaneous decomposition of normal L-aspartyl and L-asparaginyl residues. It plays a role in the repair and/or degradation of damaged proteins. This chain is Protein-L-isoaspartate O-methyltransferase, found in Pseudomonas putida (strain W619).